A 1065-amino-acid polypeptide reads, in one-letter code: Probable importin-7 homolog (1065 aa).

In terms of domain architecture, Importin N-terminal spans 25–98 (AEAQLQQIKV…KENLIDLLVH (74 aa)). Residues 958-996 (ENGGDLGEDEGDNFDDQNDDDDQDSEEDLFEDEDTPDFE) are disordered. The span at 963–996 (LGEDEGDNFDDQNDDDDQDSEEDLFEDEDTPDFE) shows a compositional bias: acidic residues.

It belongs to the importin beta family.

It is found in the cytoplasm. The protein resides in the nucleus. May function in nuclear protein import. In Dictyostelium discoideum (Social amoeba), this protein is Probable importin-7 homolog.